The following is a 405-amino-acid chain: CMP-sialic acid transporter 4 (405 aa).

Over 1-43 (MQRNGVMECSVCHSKVVAPSPRSVSRAYDKHRSKISSKYRALN) the chain is Cytoplasmic. A helical membrane pass occupies residues 44 to 64 (FLLVSGDCILVGLQPILVFMS). The Lumenal segment spans residues 65-74 (KVDGKFQFSP). A helical transmembrane segment spans residues 75–95 (ISVNFLTEVTKVIFAIVMLII). At 96-121 (QSRKQKVGEKPLLSLSTFVQAARNNA) the chain is on the cytoplasmic side. Residues 122 to 142 (LLAVPALLYAINNYLKFIMQL) traverse the membrane as a helical segment. Y143 is a topological domain (lumenal). A helical membrane pass occupies residues 144–164 (FSPATVKMLSNLKVLVIAILL). The Cytoplasmic portion of the chain corresponds to 165-171 (KFIMRRK). The helical transmembrane segment at 172-192 (FSIIQWEALALLLIGISVNQL) threads the bilayer. Residues 193 to 203 (SSIPDGTKSFG) lie on the Lumenal side of the membrane. A helical membrane pass occupies residues 204–224 (LAVTTIAYIYTLIFVTVPSLA). Residues 225–244 (SVYNEYALKSQFDTSIYLQN) are Cytoplasmic-facing. The helical transmembrane segment at 245–265 (LFLYGYGAIFNFLGILGTVIF) threads the bilayer. The Lumenal segment spans residues 266 to 281 (QGPESFDILRGHSRAT). Residues 282 to 302 (MFLICNNAAQGILSSFFFKYA) traverse the membrane as a helical segment. The Cytoplasmic segment spans residues 303 to 322 (DTILKKYSSTVATIFTGLAS). Residues 323–343 (AAFLGHTLTVNFLLGISIVFI) traverse the membrane as a helical segment. At 344-405 (SMHQFFSPLA…TDERKPLLPI (62 aa)) the chain is on the lumenal side.

Belongs to the nucleotide-sugar transporter family. CMP-Sialate:CMP antiporter (TC 2.A.7.12) subfamily.

The protein localises to the golgi apparatus membrane. Sugar transporter involved in the transport of CMP-sialic acid from the cytoplasm into the Golgi. May transport important nucleotide sugars such as CMP-Kdo (2-keto-3-deoxy-D-manno-octulosonic acid) in physiological conditions. The sequence is that of CMP-sialic acid transporter 4 from Oryza sativa subsp. japonica (Rice).